Consider the following 1047-residue polypeptide: Error-prone DNA polymerase (1047 aa).

It belongs to the DNA polymerase type-C family. DnaE2 subfamily.

The protein resides in the cytoplasm. It carries out the reaction DNA(n) + a 2'-deoxyribonucleoside 5'-triphosphate = DNA(n+1) + diphosphate. In terms of biological role, DNA polymerase involved in damage-induced mutagenesis and translesion synthesis (TLS). It is not the major replicative DNA polymerase. The sequence is that of Error-prone DNA polymerase from Methylococcus capsulatus (strain ATCC 33009 / NCIMB 11132 / Bath).